The following is a 339-amino-acid chain: Protein FAM76B (339 aa).

Ala2 is modified (N-acetylalanine). Residues Ser22 and Ser148 each carry the phosphoserine modification. The tract at residues 144-243 (EQRKSLGSSH…INQSADSGGT (100 aa)) is disordered. A compositionally biased stretch (low complexity) spans 148 to 160 (SLGSSHSNSSSSS). A compositionally biased stretch (basic residues) spans 167–189 (HHPKHHHHHHHHHHRHSSSHHKI). Phosphoserine is present on Ser193. Thr215 carries the phosphothreonine modification. Basic and acidic residues predominate over residues 215 to 224 (TPKKKPKLES). Residues 228-243 (NGDSSSINQSADSGGT) show a composition bias toward polar residues. Residues 248 to 328 (LISQLKEEVM…QVAALSKGKK (81 aa)) are a coiled coil.

It belongs to the FAM76 family. In terms of assembly, interacts with HNRNPA2B1 (via C-terminus); the interaction results in retention of HNRNPA2B1 in the nucleus and inhibition of the NF-kappa-B-mediated inflammatory pathway.

The protein localises to the nucleus speckle. Negatively regulates the NF-kappa-B-mediated inflammatory pathway by preventing the translocation of HNRNPA2B1 from the nucleus to the cytoplasm. Inhibits the PI3K/Akt/NF-kappa-B pathway-mediated polarization of M1 macrophages by binding to and stabilizing PIK3CD mRNA, resulting in increased levels of PIK3CD protein and increased levels of phosphorylated downstream target AKT which leads to decreased NF-kappa-B signaling. This Homo sapiens (Human) protein is Protein FAM76B (FAM76B).